Here is a 1263-residue protein sequence, read N- to C-terminus: Kinesin-like protein KIN-12E (1263 aa).

The interval 21–44 (PAPSESLRSVPCTPEANTVSRDNH) is disordered. Residues 35–44 (EANTVSRDNH) are compositionally biased toward polar residues. The Kinesin motor domain occupies 93 to 430 (NVQVIIRTRP…LKFAQRAKLI (338 aa)). 174–181 (GQTGSGKT) contacts ATP. 6 coiled-coil regions span residues 679-737 (SKKL…KIRS), 764-805 (AEAH…AEEN), 831-881 (ALEV…KRLL), 905-966 (SEKS…HQSE), 1091-1168 (TDLL…TIQE), and 1193-1251 (LRKE…VLSL).

It belongs to the TRAFAC class myosin-kinesin ATPase superfamily. Kinesin family. KIN-12 subfamily.

The sequence is that of Kinesin-like protein KIN-12E from Arabidopsis thaliana (Mouse-ear cress).